Consider the following 366-residue polypeptide: MTDLLASTLEHLETLVSFDTRNPPRAIAAEGGIFDYLRAQLPGFQVEVIDHGDGAVSLYAVRGTPKYLFNVHLDTVPDSPHWSADPHVMRRTEDRVIGLGVCDIKGAAAALVAAANAGDGDAAFLFSSDEEANDPRCIAAFLARGLPYDAVLVAEPTMSEAVLAHRGISSVLMRFAGRAGHASGKQDPAASALHQAMRWGGKALDHVESLAHARFGGLTGLRFNIGRVDGGIKANMIAPAAELRFGFRPLPSMDVDGLLATFAGFADPAAAHFEETFRGPSLPSGDIARAEERRLAARDVADALDLPIGNAVDFWTEASLFSAGGYTALVYGPGDIAQAHTADEFVTLAQLQRYVESVNRIINGSH.

His72 and Asp103 together coordinate Co(2+). Glu130 serves as the catalytic Proton donor/acceptor. Glu155 serves as a coordination point for Co(2+).

The protein belongs to the peptidase M20A family. N-acetylcitrulline deacetylase subfamily. In terms of assembly, forms homodimers in the crystal, but higher order oligomers may form in solution. Co(2+) is required as a cofactor.

The enzyme catalyses N(2)-acetyl-L-citrulline + H2O = L-citrulline + acetate. It catalyses the reaction N(2)-acetyl-L-ornithine + H2O = L-ornithine + acetate. It functions in the pathway amino-acid biosynthesis; L-arginine biosynthesis. Its function is as follows. Catalyzes the deacetylation of N-acetyl-L-citrulline to produce L-citrulline. This is a step in an alternative arginine biosynthesis pathway. Is also able to catalyze the deacetylation of N-acetylornithine in vitro, with almost equal velocity. However, this reaction may be not relevant in vivo since Xanthomonas does not possess the canonical argF gene and cannot convert ornithine to citrulline via ArgF'. This chain is N-acetyl-L-citrulline deacetylase, found in Xanthomonas campestris pv. campestris (strain ATCC 33913 / DSM 3586 / NCPPB 528 / LMG 568 / P 25).